The chain runs to 467 residues: tRNA modification GTPase MnmE (467 aa).

Positions 30, 92, and 131 each coordinate (6S)-5-formyl-5,6,7,8-tetrahydrofolate. The TrmE-type G domain maps to 226-388 (GLKVAIIGRP…LEAAILNAVN (163 aa)). Asn236 contributes to the K(+) binding site. GTP is bound by residues 236 to 241 (NVGKSS), 255 to 261 (TDLPGTT), and 280 to 283 (DTAG). Ser240 contacts Mg(2+). Residues Thr255, Leu257, and Thr260 each coordinate K(+). Thr261 contacts Mg(2+). Residue Lys467 coordinates (6S)-5-formyl-5,6,7,8-tetrahydrofolate.

It belongs to the TRAFAC class TrmE-Era-EngA-EngB-Septin-like GTPase superfamily. TrmE GTPase family. In terms of assembly, homodimer. Heterotetramer of two MnmE and two MnmG subunits. It depends on K(+) as a cofactor.

It is found in the cytoplasm. Its function is as follows. Exhibits a very high intrinsic GTPase hydrolysis rate. Involved in the addition of a carboxymethylaminomethyl (cmnm) group at the wobble position (U34) of certain tRNAs, forming tRNA-cmnm(5)s(2)U34. This Trichodesmium erythraeum (strain IMS101) protein is tRNA modification GTPase MnmE.